The primary structure comprises 188 residues: Adenine phosphoribosyltransferase (188 aa).

This sequence belongs to the purine/pyrimidine phosphoribosyltransferase family. Homodimer.

It is found in the cytoplasm. The enzyme catalyses AMP + diphosphate = 5-phospho-alpha-D-ribose 1-diphosphate + adenine. Its pathway is purine metabolism; AMP biosynthesis via salvage pathway; AMP from adenine: step 1/1. In terms of biological role, catalyzes a salvage reaction resulting in the formation of AMP, that is energically less costly than de novo synthesis. This chain is Adenine phosphoribosyltransferase, found in Burkholderia vietnamiensis (strain G4 / LMG 22486) (Burkholderia cepacia (strain R1808)).